The chain runs to 59 residues: U-reduvitoxin-Pr6a (59 aa).

The N-terminal stretch at 1 to 19 (MKVFLLTILLCFLIAYCAG) is a signal peptide. Intrachain disulfides connect Cys-31/Cys-46, Cys-38/Cys-51, and Cys-45/Cys-58.

Belongs to the venom Ptu1-like knottin family. Expressed by the venom gland.

Its subcellular location is the secreted. Binds reversibly and blocks P/Q-type voltage-gated calcium channels (Cav). In Platymeris rhadamanthus (Red spot assassin bug), this protein is U-reduvitoxin-Pr6a.